The primary structure comprises 297 residues: Thiosulfate sulfurtransferase (297 aa).

At K14 the chain carries N6-acetyllysine; alternate. K14 carries the post-translational modification N6-succinyllysine; alternate. Residues V25–S143 form the Rhodanese 1 domain. S35 is a glycosylation site (O-linked (GlcNAc) serine). S38 is modified (phosphoserine). The residue at position 136 (K136) is an N6-acetyllysine; alternate. K136 carries the N6-succinyllysine; alternate modification. Residues E144 to R159 are hinge. At K163 the chain carries N6-acetyllysine. In terms of domain architecture, Rhodanese 2 spans Q173–R288. Position 175 is an N6-acetyllysine; alternate (K175). At K175 the chain carries N6-succinyllysine; alternate. R187 contributes to the substrate binding site. N6-acetyllysine; alternate is present on K224. K224 carries the post-translational modification N6-succinyllysine; alternate. Position 236 is an N6-acetyllysine (K236). Residue K237 is modified to N6-acetyllysine; alternate. K237 bears the N6-succinyllysine; alternate mark. C248 (cysteine persulfide intermediate) is an active-site residue. Substrate is bound at residue K250.

Monomer. In terms of tissue distribution, expressed in numerous tissues.

It localises to the mitochondrion matrix. The catalysed reaction is thiosulfate + hydrogen cyanide = thiocyanate + sulfite + 2 H(+). In terms of biological role, together with MRPL18, acts as a mitochondrial import factor for the cytosolic 5S rRNA. Only the nascent unfolded cytoplasmic form is able to bind to the 5S rRNA. Involved in the formation of iron-sulfur complexes, cyanide detoxification or modification of sulfur-containing enzymes. Other thiol compounds, besides cyanide, can act as sulfur ion acceptors. Also has weak mercaptopyruvate sulfurtransferase (MST) activity. This chain is Thiosulfate sulfurtransferase (Tst), found in Rattus norvegicus (Rat).